The chain runs to 431 residues: MAKIINIIGREIMDSRGNPTVEAEVHLEGGFMGMAAAPSGASTGSREALELRDGDKARYMGKGVLKAVENINGLIRDALMGKDATAQAELDQIMIDVDGTENKDKLGANAILAVSLAAAKAAAAFKGVPLYAHIADLNGTPGQYSMPVPMMNILNGGEHADNNVDIQEFMVQPVGAKSFREALRMGAEIFHSLKSVLKSKGLSTSVGDEGGFAPDLASNADALAIIKVAVEKAGYTLGTDVTLALDCAASEFYKDGQYDLSGEGKVFSANGFSDFLKSLTEQYPIASIEDGLDESDWDGWAYQTQIMGDKIQLVGDDLFVTNTKILKRGIDNGIANSILIKFNQIGSLTETLAAIRMAKDAGYTVVISHRSGETEDATIADLAVATSAGQIKTGSLCRSDRVAKYNQLLRIEEQLGEKAPYNGLKEIKGQA.

Glutamine 167 serves as a coordination point for (2R)-2-phosphoglycerate. The active-site Proton donor is glutamate 209. Mg(2+) contacts are provided by aspartate 246, glutamate 289, and aspartate 316. Residues lysine 341, arginine 370, serine 371, and lysine 392 each coordinate (2R)-2-phosphoglycerate. Lysine 341 acts as the Proton acceptor in catalysis.

The protein belongs to the enolase family. Component of the RNA degradosome, a multiprotein complex involved in RNA processing and mRNA degradation. Requires Mg(2+) as cofactor.

It is found in the cytoplasm. The protein resides in the secreted. The protein localises to the cell surface. The catalysed reaction is (2R)-2-phosphoglycerate = phosphoenolpyruvate + H2O. Its pathway is carbohydrate degradation; glycolysis; pyruvate from D-glyceraldehyde 3-phosphate: step 4/5. Catalyzes the reversible conversion of 2-phosphoglycerate (2-PG) into phosphoenolpyruvate (PEP). It is essential for the degradation of carbohydrates via glycolysis. The polypeptide is Enolase (Shewanella halifaxensis (strain HAW-EB4)).